A 386-amino-acid polypeptide reads, in one-letter code: Succinate--CoA ligase [ADP-forming] subunit beta (386 aa).

The ATP-grasp domain maps to 9 to 244 (KEILRKYGVP…HDEEDPLETR (236 aa)). Residues Lys-46, 53–55 (GRG), Glu-99, Cys-102, and Glu-107 each bind ATP. Mg(2+) is bound by residues Asn-199 and Asp-213. Residues Asn-264 and 321 to 323 (GIM) each bind substrate.

It belongs to the succinate/malate CoA ligase beta subunit family. As to quaternary structure, heterotetramer of two alpha and two beta subunits. Mg(2+) is required as a cofactor.

The enzyme catalyses succinate + ATP + CoA = succinyl-CoA + ADP + phosphate. The catalysed reaction is GTP + succinate + CoA = succinyl-CoA + GDP + phosphate. It participates in carbohydrate metabolism; tricarboxylic acid cycle; succinate from succinyl-CoA (ligase route): step 1/1. Functionally, succinyl-CoA synthetase functions in the citric acid cycle (TCA), coupling the hydrolysis of succinyl-CoA to the synthesis of either ATP or GTP and thus represents the only step of substrate-level phosphorylation in the TCA. The beta subunit provides nucleotide specificity of the enzyme and binds the substrate succinate, while the binding sites for coenzyme A and phosphate are found in the alpha subunit. This chain is Succinate--CoA ligase [ADP-forming] subunit beta, found in Rickettsia akari (strain Hartford).